Here is a 366-residue protein sequence, read N- to C-terminus: Alanine racemase (366 aa).

Lys-40 acts as the Proton acceptor; specific for D-alanine in catalysis. At Lys-40 the chain carries N6-(pyridoxal phosphate)lysine. Arg-136 contributes to the substrate binding site. Tyr-263 acts as the Proton acceptor; specific for L-alanine in catalysis. Residue Met-310 coordinates substrate.

Belongs to the alanine racemase family. It depends on pyridoxal 5'-phosphate as a cofactor.

It carries out the reaction L-alanine = D-alanine. It functions in the pathway amino-acid biosynthesis; D-alanine biosynthesis; D-alanine from L-alanine: step 1/1. Its function is as follows. Catalyzes the interconversion of L-alanine and D-alanine. May also act on other amino acids. The protein is Alanine racemase (alr) of Streptococcus pyogenes serotype M28 (strain MGAS6180).